Here is a 100-residue protein sequence, read N- to C-terminus: NADH-quinone oxidoreductase subunit K (100 aa).

A run of 3 helical transmembrane segments spans residues 4–24 (LQHGLLLAAILFVLGLTGLVI), 28–48 (LLFMLISLEIMINASALAFVV), and 60–80 (VMYILAITLAAAEASIGLALL).

Belongs to the complex I subunit 4L family. NDH-1 is composed of 13 different subunits. Subunits NuoA, H, J, K, L, M, N constitute the membrane sector of the complex.

Its subcellular location is the cell inner membrane. The enzyme catalyses a quinone + NADH + 5 H(+)(in) = a quinol + NAD(+) + 4 H(+)(out). NDH-1 shuttles electrons from NADH, via FMN and iron-sulfur (Fe-S) centers, to quinones in the respiratory chain. The immediate electron acceptor for the enzyme in this species is believed to be ubiquinone. Couples the redox reaction to proton translocation (for every two electrons transferred, four hydrogen ions are translocated across the cytoplasmic membrane), and thus conserves the redox energy in a proton gradient. The polypeptide is NADH-quinone oxidoreductase subunit K (Musicola paradisiaca (strain Ech703) (Dickeya paradisiaca)).